Reading from the N-terminus, the 60-residue chain is Large ribosomal subunit protein uL30 (60 aa).

This sequence belongs to the universal ribosomal protein uL30 family. In terms of assembly, part of the 50S ribosomal subunit.

This chain is Large ribosomal subunit protein uL30, found in Bacillus mycoides (strain KBAB4) (Bacillus weihenstephanensis).